The following is a 314-amino-acid chain: Thymidylate synthase (314 aa).

Residues arginine 21 and arginine 176–arginine 177 contribute to the dUMP site. Catalysis depends on cysteine 196, which acts as the Nucleophile. DUMP contacts are provided by residues arginine 216 to aspartate 219, asparagine 227, and histidine 257 to tyrosine 259. Residue aspartate 219 participates in (6R)-5,10-methylene-5,6,7,8-tetrahydrofolate binding. Position 313 (serine 313) interacts with (6R)-5,10-methylene-5,6,7,8-tetrahydrofolate.

Belongs to the thymidylate synthase family. Bacterial-type ThyA subfamily. As to quaternary structure, homodimer.

It is found in the cytoplasm. The enzyme catalyses dUMP + (6R)-5,10-methylene-5,6,7,8-tetrahydrofolate = 7,8-dihydrofolate + dTMP. It functions in the pathway pyrimidine metabolism; dTTP biosynthesis. Its function is as follows. Catalyzes the reductive methylation of 2'-deoxyuridine-5'-monophosphate (dUMP) to 2'-deoxythymidine-5'-monophosphate (dTMP) while utilizing 5,10-methylenetetrahydrofolate (mTHF) as the methyl donor and reductant in the reaction, yielding dihydrofolate (DHF) as a by-product. This enzymatic reaction provides an intracellular de novo source of dTMP, an essential precursor for DNA biosynthesis. This is Thymidylate synthase from Listeria monocytogenes serotype 4a (strain HCC23).